A 391-amino-acid chain; its full sequence is Glycosyltransferase afumC (391 aa).

It belongs to the afumC glycosyltransferase family.

It participates in secondary metabolite biosynthesis. Its activity is regulated as follows. Activity is significantly decreased by addition of divalent cations such as Mg(2+), Mn(2+), Zn(2+), Ca(2+), Co(2+), Cu(2+), and Ni(2+); while Fe(2+) has little effect. In terms of biological role, glycosyltransferase; part of the gene cluster that mediates the biosynthesis fumihopaside A, a hopane-type glucoside that enhances the thermotolerance and UV resistance of N.fumigata. The first step of fumihopaside A biosynthesis is performed by the squalene hopane cyclase afumA that catalyzes the cyclization of 3S-oxidosqualene into the hopene 21-beta-H-hopane-3-beta,22-diol. The cytochrome P450 monooxygenase afumB is responsible for both hydroxylation at C-24 and oxidations at C-30 of the afumA product. The glycosyltransferase afumC then catalyzes the glycosylation at C-24, using UDP-D-glucose as a donor, to produce fumihopaside A. AfumC is also able to accept UDP-D-galactose and UDP-D-glucuronic acid as donors to yield minor derivatives. Fumihopaside B, another minor derivative produced, is different from fumihopaside A due to the presence of a double bond between C-22 and C-29. The protein is Glycosyltransferase afumC of Aspergillus fumigatus (strain CBS 144.89 / FGSC A1163 / CEA10) (Neosartorya fumigata).